A 408-amino-acid chain; its full sequence is Ribulose bisphosphate carboxylase/oxygenase activase, chloroplastic (408 aa).

The N-terminal 32 residues, 1–32 (MQVTMKSSAVSGQRVGGARVATRSVRRAQLQV), are a transit peptide targeting the chloroplast. 138-145 (GGKGQGKT) is a binding site for ATP.

This sequence belongs to the RuBisCO activase family. In terms of assembly, monomer.

The protein resides in the plastid. It is found in the chloroplast stroma. In terms of biological role, activation of RuBisCO (ribulose-1,5-bisphosphate carboxylase/oxygenase; EC 4.1.1.39) involves the ATP-dependent carboxylation of the epsilon-amino group of lysine leading to a carbamate structure. The protein is Ribulose bisphosphate carboxylase/oxygenase activase, chloroplastic of Chlamydomonas reinhardtii (Chlamydomonas smithii).